Here is a 133-residue protein sequence, read N- to C-terminus: UPF0225 protein BPP1723 (133 aa).

Belongs to the UPF0225 family.

This chain is UPF0225 protein BPP1723, found in Bordetella parapertussis (strain 12822 / ATCC BAA-587 / NCTC 13253).